The chain runs to 785 residues: Copal-8-ol diphosphate hydratase TPSSA3, chloroplastic (785 aa).

Substrate is bound at residue Arg-240. Residues Asp-372 and Asp-374 each coordinate Mg(2+). The short motif at 372–375 is the DXDD motif element; sequence DIDD. Arg-459 provides a ligand contact to substrate.

The protein belongs to the terpene synthase family. Requires Mg(2+) as cofactor.

Its subcellular location is the plastid. The protein resides in the chloroplast. The catalysed reaction is (2E,6E,10E)-geranylgeranyl diphosphate + H2O = 8-hydroxycopalyl diphosphate. Its pathway is secondary metabolite biosynthesis; terpenoid biosynthesis. Involved in the biosynthesis of labdane-type diterpenoid including sclareol, a diterpene-diol that is used as fragrance and flavoring, and has anticancer effects (able to kill leukemic and colon cancer cells by apoptosis). Sclareol can also be used as synthesis precursor of ambergris substitution fragance products such as ambrox. Terpene synthase that produces 8-hydroxycopalyl diphosphate from geranylgeranyl diphosphate (GGPP). This is Copal-8-ol diphosphate hydratase TPSSA3, chloroplastic from Salvia sclarea (Clary sage).